Reading from the N-terminus, the 255-residue chain is Probable UDP-N-acetylglucosamine pyrophosphorylase (255 aa).

The enzyme catalyses N-acetyl-alpha-D-glucosamine 1-phosphate + UTP + H(+) = UDP-N-acetyl-alpha-D-glucosamine + diphosphate. Its pathway is nucleotide-sugar biosynthesis; UDP-N-acetyl-alpha-D-glucosamine biosynthesis; UDP-N-acetyl-alpha-D-glucosamine from N-acetyl-alpha-D-glucosamine 1-phosphate: step 1/1. This Acanthamoeba polyphaga (Amoeba) protein is Probable UDP-N-acetylglucosamine pyrophosphorylase.